A 415-amino-acid chain; its full sequence is Serine hydroxymethyltransferase (415 aa).

(6S)-5,6,7,8-tetrahydrofolate is bound by residues L121 and 125-127; that span reads GHL. The residue at position 230 (K230) is an N6-(pyridoxal phosphate)lysine. Position 355–357 (355–357) interacts with (6S)-5,6,7,8-tetrahydrofolate; the sequence is SPF.

The protein belongs to the SHMT family. As to quaternary structure, homodimer. Pyridoxal 5'-phosphate serves as cofactor.

The protein localises to the cytoplasm. It catalyses the reaction (6R)-5,10-methylene-5,6,7,8-tetrahydrofolate + glycine + H2O = (6S)-5,6,7,8-tetrahydrofolate + L-serine. Its pathway is one-carbon metabolism; tetrahydrofolate interconversion. It participates in amino-acid biosynthesis; glycine biosynthesis; glycine from L-serine: step 1/1. Catalyzes the reversible interconversion of serine and glycine with tetrahydrofolate (THF) serving as the one-carbon carrier. This reaction serves as the major source of one-carbon groups required for the biosynthesis of purines, thymidylate, methionine, and other important biomolecules. Also exhibits THF-independent aldolase activity toward beta-hydroxyamino acids, producing glycine and aldehydes, via a retro-aldol mechanism. The polypeptide is Serine hydroxymethyltransferase (Lactococcus lactis subsp. cremoris (strain MG1363)).